The chain runs to 150 residues: Arginine repressor (150 aa).

This sequence belongs to the ArgR family.

The protein resides in the cytoplasm. It functions in the pathway amino-acid biosynthesis; L-arginine biosynthesis [regulation]. In terms of biological role, regulates arginine biosynthesis genes. The sequence is that of Arginine repressor from Clostridium botulinum (strain 657 / Type Ba4).